A 106-amino-acid chain; its full sequence is UPF0060 membrane protein AZC_0909 (106 aa).

4 helical membrane-spanning segments follow: residues 4–24 (PLFA…WHVV), 27–47 (GGSP…AALL), 58–78 (AFAA…WAAE), and 84–104 (RFDA…LFAP).

It belongs to the UPF0060 family.

Its subcellular location is the cell inner membrane. The protein is UPF0060 membrane protein AZC_0909 of Azorhizobium caulinodans (strain ATCC 43989 / DSM 5975 / JCM 20966 / LMG 6465 / NBRC 14845 / NCIMB 13405 / ORS 571).